A 281-amino-acid polypeptide reads, in one-letter code: Histidine biosynthesis bifunctional protein hisIE, chloroplastic (281 aa).

The N-terminal 50 residues, 1–50, are a transit peptide targeting the chloroplast; the sequence is MAVSYNALAQSLARSSCFIPKPYSFRDTKLRSRSNVVFACNDNKNIALQA. The segment at 51–178 is phosphoribosyl-AMP cyclohydrolase; the sequence is KVDNLLDRIK…NKLALTTLYS (128 aa). The phosphoribosyl-ATP pyrophosphohydrolase stretch occupies residues 179–281; sequence LESIISKRKE…GIEEKQNRTK (103 aa).

It in the N-terminal section; belongs to the PRA-CH family. The protein in the C-terminal section; belongs to the PRA-PH family. As to expression, ubiquitously expressed throughout development.

It localises to the plastid. It is found in the chloroplast. It carries out the reaction 1-(5-phospho-beta-D-ribosyl)-ATP + H2O = 1-(5-phospho-beta-D-ribosyl)-5'-AMP + diphosphate + H(+). It catalyses the reaction 1-(5-phospho-beta-D-ribosyl)-5'-AMP + H2O = 1-(5-phospho-beta-D-ribosyl)-5-[(5-phospho-beta-D-ribosylamino)methylideneamino]imidazole-4-carboxamide. Its pathway is amino-acid biosynthesis; L-histidine biosynthesis; L-histidine from 5-phospho-alpha-D-ribose 1-diphosphate: step 2/9. It functions in the pathway amino-acid biosynthesis; L-histidine biosynthesis; L-histidine from 5-phospho-alpha-D-ribose 1-diphosphate: step 3/9. In Arabidopsis thaliana (Mouse-ear cress), this protein is Histidine biosynthesis bifunctional protein hisIE, chloroplastic (HISN2).